The sequence spans 480 residues: Major facilitator superfamily domain-containing protein 12 (480 aa).

M1 is modified (N-acetylmethionine). Residues M1 to A26 lie on the Cytoplasmic side of the membrane. Residues V27–L47 form a helical membrane-spanning segment. Topologically, residues H48 to R56 are lumenal. The helical transmembrane segment at G57–G77 threads the bilayer. Residues Y78 to H97 are Cytoplasmic-facing. Residues L98–C118 traverse the membrane as a helical segment. The Lumenal segment spans residues G119–E124. Residues W125–T145 form a helical membrane-spanning segment. Topologically, residues Q146–R170 are cytoplasmic. Residues Y171–L191 traverse the membrane as a helical segment. The Lumenal portion of the chain corresponds to Q192–R218. A helical transmembrane segment spans residues N219–T239. The Cytoplasmic segment spans residues R240–Q279. Position 254 is a phosphothreonine; by MTOR (T254). A helical transmembrane segment spans residues V280 to L302. The Lumenal segment spans residues T303–K310. A helical membrane pass occupies residues K311–M331. The Cytoplasmic portion of the chain corresponds to K332–G347. The next 2 membrane-spanning stretches (helical) occupy residues L348–V368 and Y369–M389. Residues T390 to A402 are Cytoplasmic-facing. A helical membrane pass occupies residues F403 to I423. Topologically, residues Q424–M446 are lumenal. Residues V447 to W467 form a helical membrane-spanning segment. The Cytoplasmic segment spans residues P468–P480.

Belongs to the major facilitator superfamily. Post-translationally, phosphorylation at Thr-254 by MTOR via mTORC1 pathway promotes cysteine transport in lysosomes, thereby regulating lysosomal cysteine and cystine storage and redox homeostasis. Widely expressed, with high expression in primary melanocytes.

It is found in the melanosome membrane. It localises to the lysosome membrane. It carries out the reaction L-cysteine(in) = L-cysteine(out). In terms of biological role, transporter that mediates the import of cysteine into melanosomes, thereby regulating skin pigmentation. In melanosomes, cysteine import is required both for normal levels of cystine, the oxidized dimer of cysteine, and provide cysteine for the production of the cysteinyldopas used in pheomelanin synthesis, thereby regulating skin pigmentation. Also catalyzes import of cysteine into lysosomes in non-pigmented cells, regulating lysosomal cystine and cysteine storage, which is essnetial for redox homeostasis. The polypeptide is Major facilitator superfamily domain-containing protein 12 (Homo sapiens (Human)).